Reading from the N-terminus, the 810-residue chain is Transmembrane GTPase Marf (810 aa).

The Cytoplasmic segment spans residues 1-637 (MAAYLNRTIS…TTTPVEATPV (637 aa)). Thr-8 bears the Phosphothreonine mark. The disordered stretch occupies residues 13–40 (TGQTGPADDDRHASSTDTVDKSGPGSPL). Positions 20 to 32 (DDDRHASSTDTVD) are enriched in basic and acidic residues. Residue Ser-38 is modified to Phosphoserine. Residues 134 to 382 (QRDHMKVAFF…IRYFEFQDFE (249 aa)) form the Dynamin-type G domain. The interval 144 to 151 (GRTSNGKS) is G1 motif. 147 to 152 (SNGKSS) contacts GTP. Residues 170–171 (TT) form a G2 motif region. Residues 239–242 (DSPG) are G3 motif. A GTP-binding site is contributed by 298 to 301 (NRWD). The G4 motif stretch occupies residues 298-301 (NRWD). Position 327 (Lys-327) is a region of interest, G5 motif. Ser-345 provides a ligand contact to GTP. Positions 427–476 (RNLKQDQKNLLTERIQGTETQMMQVTREMKMKIHNMVEEVEEKVSKALNE) form a coiled coil. Phosphothreonine is present on Thr-553. Phosphoserine is present on Ser-554. Thr-555 is modified (phosphothreonine). The disordered stretch occupies residues 609–630 (GQPALVNRQSSIGHSVSTPTTT). Residues 638 to 648 (CLLPAPVVAGI) form a helical membrane-spanning segment. The Mitochondrial intermembrane portion of the chain corresponds to 649–668 (TPEQLSLISRFAVSSIGSQG). Residues 669–689 (TVGGLVVAGVMLKTIGWRVLV) form a helical membrane-spanning segment. The Cytoplasmic portion of the chain corresponds to 690–810 (GVGALYGCIY…IFEHNYISPQ (121 aa)). Residues 759-806 (TATTDMNDELKTLDSQLNILEANQKQLKLLRNKANYIQNELDIFEHNY) adopt a coiled-coil conformation.

This sequence belongs to the TRAFAC class dynamin-like GTPase superfamily. Dynamin/Fzo/YdjA family. Mitofusin subfamily. Interacts with Mul1. Post-translationally, ubiquitinated by park and Mul1. Ubiquitinated, probably by HUWE1, when dietary stearate (C18:0) levels are low; ubiquitination inhibits mitochondrial fusion. Widely expressed in embryos, accumulating in the mesoderm and endoderm during gut development. In the male germ line, it is expressed in spermatogonia, spermatocytes and early spermatids.

The protein localises to the mitochondrion outer membrane. It carries out the reaction GTP + H2O = GDP + phosphate + H(+). Functionally, mitochondrial outer membrane GTPase that mediates mitochondrial clustering and fusion. Mitochondrial fusion is the physical merging of mitochondria that gives rise to mitochondrial networks, and this process is counterbalanced by mitochondrial fission which fragments networks. Promotes, but is not required for park recruitment to dysfunctional mitochondria. The protein is Transmembrane GTPase Marf (Marf) of Drosophila melanogaster (Fruit fly).